The primary structure comprises 212 residues: NEDD4 family-interacting protein 1 (212 aa).

Positions 1 to 14 are enriched in polar residues; that stretch reads MSEQSSSSRYQQLQ. The segment at 1 to 40 is disordered; that stretch reads MSEQSSSSRYQQLQNEEEPGENAQASADAPPPYSSIAGES. Over 1-107 the chain is Cytoplasmic; it reads MSEQSSSSRY…ADQLRIGNDG (107 aa). 2 short sequence motifs (PPxY motif) span residues 30-33 and 55-58; these read PPPY and PPSY. A helical transmembrane segment spans residues 108-128; that stretch reads IFMLTFFMAFLFNWIGFFLSF. At 129 to 134 the chain is on the extracellular side; it reads CLTSSA. A helical membrane pass occupies residues 135 to 155; that stretch reads AGRYGAISGFGLSLIKWILIV. The Cytoplasmic segment spans residues 156 to 163; sequence RFSTYFPG. The chain crosses the membrane as a helical span at residues 164-184; sequence YFDGQYWLWWVFLVLGFLLFL. At 185 to 212 the chain is on the extracellular side; sequence RGFINYAKVRKMPDNFSTLPRTRVLFIY.

The protein localises to the golgi apparatus membrane. Its function is as follows. May play a role in Golgi structure maintenance. This is NEDD4 family-interacting protein 1 (ndfip1) from Xenopus laevis (African clawed frog).